Here is a 139-residue protein sequence, read N- to C-terminus: Large ribosomal subunit protein uL22 (139 aa).

Positions 1 to 21 (MTAPEQTYRNKKQRKQQHKLR) are disordered. Residues 9–21 (RNKKQRKQQHKLR) are compositionally biased toward basic residues.

Belongs to the universal ribosomal protein uL22 family. In terms of assembly, part of the 50S ribosomal subunit.

This protein binds specifically to 23S rRNA; its binding is stimulated by other ribosomal proteins, e.g. L4, L17, and L20. It is important during the early stages of 50S assembly. It makes multiple contacts with different domains of the 23S rRNA in the assembled 50S subunit and ribosome. Its function is as follows. The globular domain of the protein is located near the polypeptide exit tunnel on the outside of the subunit, while an extended beta-hairpin is found that lines the wall of the exit tunnel in the center of the 70S ribosome. In Deinococcus geothermalis (strain DSM 11300 / CIP 105573 / AG-3a), this protein is Large ribosomal subunit protein uL22.